The chain runs to 262 residues: Aminoglycoside (3'') (9) adenylyltransferase (262 aa).

An adenylyltransferase domain region spans residues 1–157 (MTLSIPPSIQ…ERAERLFTPA (157 aa)). The ATP site is built by serine 36, serine 46, and aspartate 47. Residues aspartate 47, aspartate 49, and glutamate 87 each coordinate Mg(2+). Glutamate 87 acts as the Proton acceptor in catalysis. An ATP-binding site is contributed by aspartate 130. The helical domain stretch occupies residues 158–262 (PAAQLLKALR…AKAHIPTQFT (105 aa)). Streptomycin contacts are provided by residues 173–178 (WQSTAD) and histidine 185. Positions 205 and 231 each coordinate ATP.

Monomer.

The enzyme catalyses streptomycin + ATP = 3''-O-adenylylstreptomycin + diphosphate. The catalysed reaction is spectinomycin + ATP = 9-O-adenylylspectinomycin + diphosphate. Mediates bacterial resistance to the antibiotics streptomycin and spectinomycin, does not confer resistance to kanamycin. Binds ATP first, then antibiotic. The protein is Aminoglycoside (3'') (9) adenylyltransferase (aadA) of Salmonella typhimurium (strain LT2 / SGSC1412 / ATCC 700720).